The sequence spans 343 residues: 3-oxopimeloyl-[acyl-carrier-protein] synthase (343 aa).

Catalysis depends on residues cysteine 132 and histidine 272. The segment at 273–277 is ACP-binding; sequence QANHR. Asparagine 302 is an active-site residue.

Belongs to the thiolase-like superfamily. BioZ family.

It catalyses the reaction malonyl-[ACP] + an acyl-CoA + H(+) = a 3-oxoacyl-[ACP] + CO2 + CoA. The enzyme catalyses glutaryl-CoA + malonyl-[ACP] + H(+) = 3-oxo-6-carboxyhexanoyl-[ACP] + CO2 + CoA. It functions in the pathway cofactor biosynthesis; biotin biosynthesis. In terms of biological role, involved in the formation of the biotin precursor pimeloyl-ACP. Catalyzes the condensation of glutaryl-CoA, an intermediate in lysine degradation, with malonyl-ACP to produce 3-oxopimeloyl-ACP. This Rhodothermus marinus (strain ATCC 43812 / DSM 4252 / R-10) (Rhodothermus obamensis) protein is 3-oxopimeloyl-[acyl-carrier-protein] synthase.